Reading from the N-terminus, the 876-residue chain is Alanine--tRNA ligase (876 aa).

Residues H564, H568, C666, and H670 each coordinate Zn(2+).

Belongs to the class-II aminoacyl-tRNA synthetase family. Homotetramer. Zn(2+) is required as a cofactor.

The protein localises to the cytoplasm. The enzyme catalyses tRNA(Ala) + L-alanine + ATP = L-alanyl-tRNA(Ala) + AMP + diphosphate. Functionally, catalyzes the attachment of alanine to tRNA(Ala) in a two-step reaction: alanine is first activated by ATP to form Ala-AMP and then transferred to the acceptor end of tRNA(Ala). Also edits incorrectly charged Ser-tRNA(Ala) and Gly-tRNA(Ala) via its editing domain. In Salmonella paratyphi A (strain ATCC 9150 / SARB42), this protein is Alanine--tRNA ligase.